A 320-amino-acid polypeptide reads, in one-letter code: L-lactate dehydrogenase A (320 aa).

Substrate contacts are provided by R88, N120, and R151. N120 is a binding site for NAD(+). H175 (proton acceptor) is an active-site residue.

Belongs to the LDH/MDH superfamily. LDH family. As to quaternary structure, homotetramer.

It is found in the cytoplasm. The enzyme catalyses (S)-lactate + NAD(+) = pyruvate + NADH + H(+). Its pathway is fermentation; pyruvate fermentation to lactate; (S)-lactate from pyruvate: step 1/1. Functionally, converts pyruvate to lactate. In Rhizopus oryzae (Mucormycosis agent), this protein is L-lactate dehydrogenase A (LDHA).